Reading from the N-terminus, the 479-residue chain is MTSFVSFLPELVLLAGALALFVVTLGQNNVRLARILSVATASGVLVAALATVNHSAVLFSGAYRVDAFSQLLKIAIAFGYLCVGILSGQLRDIRGEAKPEYFLFLALSMTGLLALVSSIDVITLIIALELSSFPLYLMVAMRREREGQRVQMESAIKYIMFGIAANGVMFFGFGYLYGLTGSTSLPVILEKLPPLLSSPLAVTGLALTLAGFLYKLAVFPFHFWTPDVYQGSSNETASLIASLPKLGAVAVLVRFVSLAAPGHETLATLLTCLAIASMVYGNLIALVQTDLKRLLGFSGIAHAGYVMVGFVAMDNFGFASALYYIAGYMLMVLACFVVVCQVSRDGANVAITELAGLHKRSPLLAVTLIVGVFALAGVPPFVGFMAKLNLLTSAWQAGHTALVVLTVINSAIAIYYYLQIVRAAFFAESDAQPAPIALTPSMSALCVLLIVAITLLGVAPAFTIDAITNSLATISTVSS.

14 consecutive transmembrane segments (helical) span residues 4–24 (FVSF…FVVT), 43–63 (GVLV…SGAY), 67–87 (AFSQ…GILS), 99–119 (PEYF…VSSI), 121–141 (VITL…MVAM), 159–179 (IMFG…LYGL), 201–221 (AVTG…VFPF), 239–259 (LIAS…VSLA), 267–287 (ATLL…IALV), 294–314 (LLGF…VAMD), 318–338 (FASA…CFVV), 364–384 (LAVT…FVGF), 401–421 (ALVV…LQIV), and 444–464 (ALCV…AFTI).

It belongs to the complex I subunit 2 family. As to quaternary structure, NDH-1 is composed of 14 different subunits. Subunits NuoA, H, J, K, L, M, N constitute the membrane sector of the complex.

It is found in the cell inner membrane. The enzyme catalyses a quinone + NADH + 5 H(+)(in) = a quinol + NAD(+) + 4 H(+)(out). NDH-1 shuttles electrons from NADH, via FMN and iron-sulfur (Fe-S) centers, to quinones in the respiratory chain. The immediate electron acceptor for the enzyme in this species is believed to be ubiquinone. Couples the redox reaction to proton translocation (for every two electrons transferred, four hydrogen ions are translocated across the cytoplasmic membrane), and thus conserves the redox energy in a proton gradient. This chain is NADH-quinone oxidoreductase subunit N 2, found in Opitutus terrae (strain DSM 11246 / JCM 15787 / PB90-1).